The following is an 86-amino-acid chain: Triple QxxK/R motif-containing protein (86 aa).

A helical membrane pass occupies residues 51–71 (VGLVLAAILALLLAFYAFFYL).

The protein belongs to the TRIQK family.

Its subcellular location is the endoplasmic reticulum membrane. Its function is as follows. May play a role in cell growth and maintenance of cell morphology. This Pongo abelii (Sumatran orangutan) protein is Triple QxxK/R motif-containing protein (TRIQK).